The sequence spans 200 residues: Recombination protein RecR (200 aa).

The segment at 57 to 72 (CRQCRTLTEDELCPQC) adopts a C4-type zinc-finger fold. The region spanning 80-175 (TLLCVVEGPM…ITSRIAHGVP (96 aa)) is the Toprim domain.

It belongs to the RecR family.

Functionally, may play a role in DNA repair. It seems to be involved in an RecBC-independent recombinational process of DNA repair. It may act with RecF and RecO. This is Recombination protein RecR from Pseudomonas fluorescens (strain ATCC BAA-477 / NRRL B-23932 / Pf-5).